A 331-amino-acid chain; its full sequence is Phenol 2-monooxygenase, oxygenase component DmpL (331 aa).

It belongs to the TmoE/XamoE family. As to quaternary structure, the multicomponent enzyme phenol hydroxylase is formed by DmpL (P1 component), DmpM (P2 component), DmpN (P3 component), DmpO (P4 component) and DmpP (P5 component). The oxygenase component is a dimer composed of three subunits, DmpL, DmpN and DmpO (DmpLNO). DmpL interacts with the auxiliary protein DmpK (P0 component).

It catalyses the reaction phenol + NADH + O2 + H(+) = catechol + NAD(+) + H2O. Its pathway is aromatic compound metabolism; phenol degradation. Its activity is regulated as follows. Requires DmpM for efficient turnover. The activity of DmpLNO oxygenase is inhibited by dithiothreitol (DTT) by a mechanism apparently involving H(2)O(2) generation. In terms of biological role, part of a multicomponent enzyme which catalyzes the degradation of phenol and some of its methylated derivatives. DmpL, DmpN and DmpO form the oxygenase component of the complex. Required for growth on phenol and for in vitro phenol hydroxylase activity. The protein is Phenol 2-monooxygenase, oxygenase component DmpL of Pseudomonas sp. (strain CF600).